The chain runs to 222 residues: MYNIEKFIKVGAHFGHTTSKWNPNMRKYIFMKKGGIHIIDISKTIKKINEACKFIKNIVSSGKKILFVATKKQAKDIVSDYAKKVNMPYITERWLGGILTNMSTIRQSVKKMNVIDRQKIDGTYNMMSKKEKLLIDRLKNKLKKNIGSISKMNSLPACVIIVDVKKEKIAVKECINLCIPIIGIVDTNCDPRNIDYPIPANDDSSKSIHLIISYLTNSILTN.

It belongs to the universal ribosomal protein uS2 family.

In Karelsulcia muelleri (strain GWSS) (Sulcia muelleri), this protein is Small ribosomal subunit protein uS2.